Reading from the N-terminus, the 615-residue chain is MQQNQVKKGTKEMEFFTEYGDANRYRILEVIGKGSYGVVCAAIDTHTGEKVAIKKINDVFEHISDALRILREVKLLRLLRHPDIVEIKSIMLPPSKREFKDIYVVFELMESDLHQVIKANDDLTREHHQFFLYQMLRALKFMHTANVYHRDLKPKNILANANCKLKVCDFGLARVAFNDTPTTVFWTDYVATRWYRAPELCGSFFSKYTPAIDVWSIGCIFAEVLTGKPLFPGKSVVHQLELITDLLGTPKSETISGVRNDKARKYLTEMRKKNPVTFSQKFSKADPLALRLLQRLLAFDPKDRPTPAEALADPYFKGLSKIEREPSSQQISKMEFEFERRRLTKDDIRELIYREILEYHPQLLKDYMSGSEGSNFVYPSAIGHLRQQFTYLEENSSRNGPVIPLERKHASLPRSTVHSTVVHSTSQPNLGATDSRRVSFEPSKNGASSAGHPSTSAYPTKSIGPPPRVPPSGRPGRVVESSVSYENGRNLKEAYFRSAVSSPHCYFRPNTMTNPENRNIEASSFPPKPQNPVHQFSPTEPPAATTNQADVETMNHPNPYFQPQLPKTDQLNNNTHMAIDAKLLQAQSQFGPAGAAAVAVAAHRNIGTISYSAAS.

The Protein kinase domain occupies 25–316 (YRILEVIGKG…PAEALADPYF (292 aa)). ATP-binding positions include 31-39 (IGKGSYGVV) and Lys-54. Catalysis depends on Asp-151, which acts as the Proton acceptor. Thr-187 is subject to Phosphothreonine. The TXY motif lies at 187–189 (TDY). Tyr-189 is subject to Phosphotyrosine. Thr-192 carries the post-translational modification Phosphothreonine. Disordered regions lie at residues 414 to 483 (RSTV…ESSV) and 510 to 544 (NTMT…PPAA). The span at 415-426 (STVHSTVVHSTS) shows a compositional bias: low complexity. A compositionally biased stretch (polar residues) spans 445–459 (NGASSAGHPSTSAYP). A compositionally biased stretch (pro residues) spans 464–473 (GPPPRVPPSG). 2 stretches are compositionally biased toward polar residues: residues 510 to 522 (NTMT…NIEA) and 532 to 544 (PVHQ…PPAA).

This sequence belongs to the protein kinase superfamily. CMGC Ser/Thr protein kinase family. MAP kinase subfamily. As to quaternary structure, interacts with PHS1. Binds to MAPKKK20. In terms of processing, dually phosphorylated on Thr-187 and Tyr-189, which activates the enzyme. Phosphorylated by MAPKKK20. In terms of tissue distribution, expressed in roots, seedlings, leaves, flower buds, flowers and siliques.

The protein resides in the nucleus. The protein localises to the cytoplasm. It catalyses the reaction L-seryl-[protein] + ATP = O-phospho-L-seryl-[protein] + ADP + H(+). It carries out the reaction L-threonyl-[protein] + ATP = O-phospho-L-threonyl-[protein] + ADP + H(+). Its activity is regulated as follows. Activated by threonine and tyrosine phosphorylation. Inactivated by phosphatase PHS1. Its function is as follows. Mitogen-activated protein kinase (MAPK) that is specifically regulated by PHS1 and MAPKKK20 and mediates signaling that regulates cortical microtubule functions, maybe through regulation of microtubule dynamic instability. The polypeptide is Mitogen-activated protein kinase 18 (Arabidopsis thaliana (Mouse-ear cress)).